The primary structure comprises 276 residues: Anthranilate synthase beta subunit 1, chloroplastic (276 aa).

Residues 1 to 50 (MAASTLYKSCLLQPKSGSTTRRLNPSLVNPLTNPTRVSVLGKSRRDVFAK) constitute a chloroplast transit peptide. The region spanning 74–273 (PIIVIDNYDS…IKIVEKKESE (200 aa)) is the Glutamine amidotransferase type-1 domain. Cys-152 functions as the Nucleophile in the catalytic mechanism. Catalysis depends on residues His-247 and Glu-249.

In terms of assembly, heterotetramer consisting of two non-identical subunits: a beta subunit and a large alpha subunit. In terms of tissue distribution, expressed in the central cylinder of mature primary root zones, including pericycle and early lateral root primordia, and vasculature of cotyledons.

Its subcellular location is the plastid. The protein localises to the chloroplast. It catalyses the reaction chorismate + L-glutamine = anthranilate + pyruvate + L-glutamate + H(+). The protein operates within amino-acid biosynthesis; L-tryptophan biosynthesis; L-tryptophan from chorismate: step 1/5. Functionally, part of a heterotetrameric complex that catalyzes the two-step biosynthesis of anthranilate, an intermediate in the biosynthesis of L-tryptophan. In the first step, the glutamine-binding beta subunit of anthranilate synthase (AS) provides the glutamine amidotransferase activity which generates ammonia as a substrate that, along with chorismate, is used in the second step, catalyzed by the large alpha subunit of AS to produce anthranilate. Plays an important regulatory role in auxin production via the tryptophan-dependent biosynthetic pathway. In Arabidopsis thaliana (Mouse-ear cress), this protein is Anthranilate synthase beta subunit 1, chloroplastic (ASB1).